An 846-amino-acid chain; its full sequence is Penicillin G acylase (846 aa).

The first 26 residues, 1-26 (MKNRNRMIVNCVTASLMYYWSLPALA), serve as a signal peptide directing secretion. A Ca(2+)-binding site is contributed by Glu-178. Residues 236 to 289 (ALLPRYDLPAPMLDRPAKGADGALLALTAGKNRETIAAQFAQGGANGLAGYPTT) constitute a propeptide, spacer peptide. The active-site Nucleophile is Ser-290. Ca(2+)-binding residues include Asp-362, Val-364, Asp-365, Pro-494, and Asp-541.

This sequence belongs to the peptidase S45 family. As to quaternary structure, heterodimer of an alpha subunit and a beta subunit processed from the same precursor. Ca(2+) is required as a cofactor.

The protein localises to the periplasm. The catalysed reaction is a penicillin + H2O = 6-aminopenicillanate + a carboxylate. The chain is Penicillin G acylase (pac) from Escherichia coli.